Reading from the N-terminus, the 87-residue chain is DNA-directed RNA polymerase subunit omega (87 aa).

The protein belongs to the RNA polymerase subunit omega family. The RNAP catalytic core consists of 2 alpha, 1 beta, 1 beta' and 1 omega subunit. When a sigma factor is associated with the core the holoenzyme is formed, which can initiate transcription.

The catalysed reaction is RNA(n) + a ribonucleoside 5'-triphosphate = RNA(n+1) + diphosphate. Its function is as follows. Promotes RNA polymerase assembly. Latches the N- and C-terminal regions of the beta' subunit thereby facilitating its interaction with the beta and alpha subunits. This chain is DNA-directed RNA polymerase subunit omega, found in Azotobacter vinelandii (strain DJ / ATCC BAA-1303).